The following is a 250-amino-acid chain: DNA repair protein RecO (250 aa).

It belongs to the RecO family.

Involved in DNA repair and RecF pathway recombination. The chain is DNA repair protein RecO from Staphylococcus aureus (strain Mu3 / ATCC 700698).